The chain runs to 20 residues: NPVDDHHDDHHDAPIVEHHD.

Residues 1–20 (NPVDDHHDDHHDAPIVEHHD) form a disordered region.

As to quaternary structure, homodimer. Glycosylated.

Functionally, appears to be a building block of the soluble organic matrix of the shell. The protein binds calcium. The sequence is that of Major extrapallial fluid protein from Mytilus edulis (Blue mussel).